The chain runs to 465 residues: tRNA-2-methylthio-N(6)-dimethylallyladenosine synthase (465 aa).

The MTTase N-terminal domain maps to 26–141 (MRAHIITYGC…LPEALKANER (116 aa)). [4Fe-4S] cluster-binding residues include C35, C71, C104, C173, C177, and C180. One can recognise a Radical SAM core domain in the interval 159–388 (PKGALSAHVT…IEKQKEWSYR (230 aa)). The TRAM domain occupies 391–453 (LEWVGKTVEV…PHLLFGEVVG (63 aa)).

This sequence belongs to the methylthiotransferase family. MiaB subfamily. As to quaternary structure, monomer. [4Fe-4S] cluster is required as a cofactor.

The protein resides in the cytoplasm. It catalyses the reaction N(6)-dimethylallyladenosine(37) in tRNA + (sulfur carrier)-SH + AH2 + 2 S-adenosyl-L-methionine = 2-methylsulfanyl-N(6)-dimethylallyladenosine(37) in tRNA + (sulfur carrier)-H + 5'-deoxyadenosine + L-methionine + A + S-adenosyl-L-homocysteine + 2 H(+). Functionally, catalyzes the methylthiolation of N6-(dimethylallyl)adenosine (i(6)A), leading to the formation of 2-methylthio-N6-(dimethylallyl)adenosine (ms(2)i(6)A) at position 37 in tRNAs that read codons beginning with uridine. In Thermus thermophilus (strain ATCC 27634 / DSM 579 / HB8), this protein is tRNA-2-methylthio-N(6)-dimethylallyladenosine synthase.